The following is a 312-amino-acid chain: Zinc transporter ZitB (312 aa).

5 consecutive transmembrane segments (helical) span residues Leu21–Leu41, Leu48–Val68, Ala90–Ile110, Leu123–His143, and Leu164–Pro184.

This sequence belongs to the cation diffusion facilitator (CDF) transporter (TC 2.A.4) family. SLC30A subfamily.

It is found in the cell inner membrane. Involved in zinc efflux across the cytoplasmic membrane, thus reducing zinc accumulation in the cytoplasm and rendering bacteria more resistant to zinc. It may contribute to zinc homeostasis at low concentrations of zinc. The polypeptide is Zinc transporter ZitB (Salmonella typhi).